The primary structure comprises 193 residues: Ion-translocating oxidoreductase complex subunit A (193 aa).

The next 6 helical transmembrane spans lie at 5-25 (LLLF…FLGL), 39-59 (MGMG…AWLI), 63-83 (ILIP…VIAV), 102-122 (LLGI…VALL), 134-154 (ALYG…FAAI), and 171-191 (AIAL…SGLV).

It belongs to the NqrDE/RnfAE family. As to quaternary structure, the complex is composed of six subunits: RsxA, RsxB, RsxC, RsxD, RsxE and RsxG.

It is found in the cell inner membrane. Functionally, part of a membrane-bound complex that couples electron transfer with translocation of ions across the membrane. Required to maintain the reduced state of SoxR. The polypeptide is Ion-translocating oxidoreductase complex subunit A (Shigella boydii serotype 18 (strain CDC 3083-94 / BS512)).